A 266-amino-acid chain; its full sequence is Hydroxyethylthiazole kinase (266 aa).

Substrate is bound at residue methionine 46. ATP contacts are provided by arginine 122 and serine 168. Glycine 195 contributes to the substrate binding site.

The protein belongs to the Thz kinase family. Mg(2+) is required as a cofactor.

The catalysed reaction is 5-(2-hydroxyethyl)-4-methylthiazole + ATP = 4-methyl-5-(2-phosphooxyethyl)-thiazole + ADP + H(+). It functions in the pathway cofactor biosynthesis; thiamine diphosphate biosynthesis; 4-methyl-5-(2-phosphoethyl)-thiazole from 5-(2-hydroxyethyl)-4-methylthiazole: step 1/1. Functionally, catalyzes the phosphorylation of the hydroxyl group of 4-methyl-5-beta-hydroxyethylthiazole (THZ). In Oleidesulfovibrio alaskensis (strain ATCC BAA-1058 / DSM 17464 / G20) (Desulfovibrio alaskensis), this protein is Hydroxyethylthiazole kinase.